The following is a 571-amino-acid chain: Translation initiation factor IF-2 (571 aa).

In terms of domain architecture, tr-type G spans 71-239; that stretch reads RRPPVVVIMG…ILLLAELEDY (169 aa). Residues 80 to 87 are G1; sequence GHVDHGKT. 80-87 serves as a coordination point for GTP; sequence GHVDHGKT. The G2 stretch occupies residues 105–109; it reads GITQH. The interval 126-129 is G3; it reads DTPG. GTP-binding positions include 126–130 and 180–183; these read DTPGH and NKID. The G4 stretch occupies residues 180 to 183; it reads NKID. Residues 216–218 are G5; it reads SAK.

The protein belongs to the TRAFAC class translation factor GTPase superfamily. Classic translation factor GTPase family. IF-2 subfamily.

The protein resides in the cytoplasm. Functionally, one of the essential components for the initiation of protein synthesis. Protects formylmethionyl-tRNA from spontaneous hydrolysis and promotes its binding to the 30S ribosomal subunits. Also involved in the hydrolysis of GTP during the formation of the 70S ribosomal complex. This chain is Translation initiation factor IF-2, found in Thermus thermophilus (strain ATCC BAA-163 / DSM 7039 / HB27).